A 530-amino-acid polypeptide reads, in one-letter code: Glucose-6-phosphate isomerase (530 aa).

The Proton donor role is filled by Glu335. Active-site residues include His366 and Lys495.

The protein belongs to the GPI family.

It is found in the cytoplasm. The catalysed reaction is alpha-D-glucose 6-phosphate = beta-D-fructose 6-phosphate. Its pathway is carbohydrate biosynthesis; gluconeogenesis. The protein operates within carbohydrate degradation; glycolysis; D-glyceraldehyde 3-phosphate and glycerone phosphate from D-glucose: step 2/4. Catalyzes the reversible isomerization of glucose-6-phosphate to fructose-6-phosphate. The sequence is that of Glucose-6-phosphate isomerase from Roseobacter denitrificans (strain ATCC 33942 / OCh 114) (Erythrobacter sp. (strain OCh 114)).